A 240-amino-acid polypeptide reads, in one-letter code: Aspartate/glutamate leucyltransferase (240 aa).

The protein belongs to the R-transferase family. Bpt subfamily.

It localises to the cytoplasm. The enzyme catalyses N-terminal L-glutamyl-[protein] + L-leucyl-tRNA(Leu) = N-terminal L-leucyl-L-glutamyl-[protein] + tRNA(Leu) + H(+). It carries out the reaction N-terminal L-aspartyl-[protein] + L-leucyl-tRNA(Leu) = N-terminal L-leucyl-L-aspartyl-[protein] + tRNA(Leu) + H(+). Its function is as follows. Functions in the N-end rule pathway of protein degradation where it conjugates Leu from its aminoacyl-tRNA to the N-termini of proteins containing an N-terminal aspartate or glutamate. The chain is Aspartate/glutamate leucyltransferase from Bordetella avium (strain 197N).